The sequence spans 288 residues: Cyclin-dependent kinase 2 homolog (288 aa).

Residues 4-284 (YHGLEKIGEG…AKQALEHAYF (281 aa)) form the Protein kinase domain. Residues 10 to 18 (IGEGTYGVV) and lysine 32 each bind ATP. Threonine 14 bears the Phosphothreonine mark. Tyrosine 15 is modified (phosphotyrosine). The active-site Proton acceptor is aspartate 125. Position 158 is a phosphothreonine (threonine 158).

It belongs to the protein kinase superfamily. CMGC Ser/Thr protein kinase family. CDC2/CDKX subfamily. As to quaternary structure, may form a complex composed of at least the catalytic subunit CRK2 and a cyclin. Mg(2+) serves as cofactor. In terms of processing, autophosphorylates in presence of cyclin cyc-1 but not in presence of cyclin cyc-3.

The protein resides in the cytoplasm. The enzyme catalyses L-seryl-[protein] + ATP = O-phospho-L-seryl-[protein] + ADP + H(+). It catalyses the reaction L-threonyl-[protein] + ATP = O-phospho-L-threonyl-[protein] + ADP + H(+). It carries out the reaction [DNA-directed RNA polymerase] + ATP = phospho-[DNA-directed RNA polymerase] + ADP + H(+). Phosphorylation at Thr-14 or Tyr-15 inactivates the enzyme, while phosphorylation at Thr-158 activates it. Activated by cyclin cyc-1 in vitro. Activated by cyclin cyc-3 in vitro. Its function is as follows. Serine/threonine-protein kinase. Involved in the control of the cell cycle. Required for entry into S-phase and mitosis. Probable component of the kinase complex that phosphorylates the repetitive C-terminus of RNA polymerase II. In schizonts, phosphorylates ORC1 resulting in its dissociation from DNA, relocalization to the cytoplasm and likely its degradation. This is Cyclin-dependent kinase 2 homolog from Plasmodium falciparum (isolate 3D7).